Consider the following 346-residue polypeptide: Short-chain dehydrogenase/reductase bet4 (346 aa).

Residues 1–35 (MTPAKAPSHAKKPEAGSQPISSMWTQMFPPKPTYT) form a disordered region. Positions 56, 80, 105, and 132 each coordinate NADP(+). The Proton donor role is filled by Ser191. NADP(+) is bound by residues Tyr222 and Lys226. The active-site Proton acceptor is Tyr222. The active-site Lowers pKa of active site Tyr is the Lys226.

The protein belongs to the short-chain dehydrogenases/reductases (SDR) family.

It catalyses the reaction dehydroprobetaenone I + AH2 = probetaenone I + A. The protein operates within mycotoxin biosynthesis. In terms of biological role, short-chain dehydrogenase/reductase; part of the gene cluster that mediates the biosynthesis of betaenones, phytotoxic polyketides involved in leaf spot disease in sugar beets. The first step of the pathway is the synthesis of dehydroprobetaenone I by the polyketide synthase bet1 and the enoyl reductase bet3 via condensation of one acetyl-CoA starter unit with 7 malonyl-CoA units and 5 methylations. The C-terminal reductase (R) domain of bet1 catalyzes the reductive release of the polyketide chain. Because bet1 lacks a designated enoylreductase (ER) domain, the required activity is provided the enoyl reductase bet3. The short-chain dehydrogenase/reductase bet4 then catalyzes reduction of dehydroprobetaenone I to probetaenone I. The cytochrome P450 monooxygenase bet2 catalyzes successive epoxidation, oxidation (resulting from epoxide opening) and hydroxylation to install a tertiary alcohol in the decaline ring to yield betaenone C from dehydroprobetaenone I and betaenone B from probetaenone I. The FAD-linked oxidoreductase (orf1) is probably responsible for the conversion of betaenone C to betaenone A via an intramolecular aldol reaction between C-1 and C-17 to form the bridged tricyclic system in betaenone A. In Neocamarosporium betae (Beet black rot fungus), this protein is Short-chain dehydrogenase/reductase bet4.